Here is a 190-residue protein sequence, read N- to C-terminus: Ribose 1,5-bisphosphate phosphokinase PhnN (190 aa).

The interval arginine 135–aspartate 159 is disordered.

Belongs to the ribose 1,5-bisphosphokinase family.

The catalysed reaction is alpha-D-ribose 1,5-bisphosphate + ATP = 5-phospho-alpha-D-ribose 1-diphosphate + ADP. It participates in metabolic intermediate biosynthesis; 5-phospho-alpha-D-ribose 1-diphosphate biosynthesis; 5-phospho-alpha-D-ribose 1-diphosphate from D-ribose 5-phosphate (route II): step 3/3. In terms of biological role, catalyzes the phosphorylation of ribose 1,5-bisphosphate to 5-phospho-D-ribosyl alpha-1-diphosphate (PRPP). The polypeptide is Ribose 1,5-bisphosphate phosphokinase PhnN (Pseudofrankia inefficax (strain DSM 45817 / CECT 9037 / DDB 130130 / EuI1c) (Frankia inefficax)).